A 270-amino-acid polypeptide reads, in one-letter code: Probable inner membrane protein BTH_II0599 (270 aa).

A run of 6 helical transmembrane segments spans residues 24-44, 45-65, 98-118, 150-170, 198-218, and 226-246; these read RNPLAFVTLFFTYLLAMMLVS, LVPVIGAALPLLLIPGIAVGF, LLTLGGLYIVSMAAVFACSAL, ALIAAALYAPVAMMFWFAPVL, VYGLLWFALALGVSFGLAALM, and YALMVMMPASIVITAMLYCSF.

The protein resides in the cell inner membrane. Functionally, (Microbial infection) Probably transports the toxic C-terminal region of CdiA-2 from B.pseudomallei strain 1026b across the inner membrane to the cytoplasm, where CdiA has a toxic effect. Expression in E.coli makes the bacteria sensitive to the tRNase domain of B.pseudomallei strain 1026b CdiA-2. This is Probable inner membrane protein BTH_II0599 from Burkholderia thailandensis (strain ATCC 700388 / DSM 13276 / CCUG 48851 / CIP 106301 / E264).